Consider the following 433-residue polypeptide: G2/mitotic-specific cyclin-B1 (433 aa).

The interval 19–47 (INMAGAKRVPTAPAATSKPGLRPRTALGD) is disordered. K73 bears the N6-acetyllysine mark. A disordered region spans residues 93–116 (PVSEPVPEPEPEPEPEPVKEEKLS). At S126 the chain carries Phosphoserine; by CDK1. S128 is subject to Phosphoserine. S133 carries the post-translational modification Phosphoserine; by PLK1. S147 is subject to Phosphoserine. Interaction with CDK2 regions lie at residues 169-177 (EYVKDIYAY) and 258-261 (YEEM). Phosphothreonine is present on T321.

Belongs to the cyclin family. Cyclin AB subfamily. As to quaternary structure, interacts with the CDC2 protein kinase to form a serine/threonine kinase holoenzyme complex also known as maturation promoting factor (MPF). The cyclin subunit imparts substrate specificity to the complex. Binds HEI10. Interacts with catalytically active RALBP1 and CDC2 during mitosis to form an endocytotic complex during interphase. Interacts with CCNF; interaction is required for nuclear localization. Interacts with CDK5RAP3. Interacts with RFPL4A and UBE2A. Interacts with INCA1. Post-translationally, ubiquitinated by the SCF(NIPA) complex during interphase, leading to its destruction. Deubiquitinated by USP22 during G2/M phase. Phosphorylated by PLK1 at Ser-133 on centrosomes during prophase: phosphorylation by PLK1 does not cause nuclear import. Phosphorylation at Ser-147 was also reported to be mediated by PLK1 but Ser-133 seems to be the primary phosphorylation site.

The protein resides in the cytoplasm. It localises to the nucleus. It is found in the cytoskeleton. The protein localises to the microtubule organizing center. Its subcellular location is the centrosome. Functionally, essential for the control of the cell cycle at the G2/M (mitosis) transition. The sequence is that of G2/mitotic-specific cyclin-B1 (CCNB1) from Homo sapiens (Human).